Consider the following 84-residue polypeptide: Small ribosomal subunit protein uS17 (84 aa).

Belongs to the universal ribosomal protein uS17 family. In terms of assembly, part of the 30S ribosomal subunit.

One of the primary rRNA binding proteins, it binds specifically to the 5'-end of 16S ribosomal RNA. The sequence is that of Small ribosomal subunit protein uS17 from Clostridium perfringens (strain ATCC 13124 / DSM 756 / JCM 1290 / NCIMB 6125 / NCTC 8237 / Type A).